Reading from the N-terminus, the 639-residue chain is Protein zwilch homolog (639 aa).

A compositionally biased stretch (basic and acidic residues) spans 76 to 95; that stretch reads QKTSSLLNRRENKKTIKSEK. The interval 76-116 is disordered; that stretch reads QKTSSLLNRRENKKTIKSEKEDESMDMETAEGDKENTVSET. Acidic residues predominate over residues 96–105; the sequence is EDESMDMETA.

It belongs to the ZWILCH family. In terms of assembly, component of the RZZ complex composed of rod-1, czw-1 and zwl-1. Interacts with the spindly-like protein spdl-1. Interacts with NDC80 complex component ndc-80.

Its subcellular location is the cytoplasm. It localises to the cell cortex. It is found in the chromosome. The protein resides in the centromere. The protein localises to the kinetochore. Its subcellular location is the cytoskeleton. It localises to the spindle. In terms of biological role, essential component of the mitotic checkpoint, which prevents cells from prematurely exiting mitosis. Required for chromosome segregation, the assembly of the dynein-dynactin and mdf-1-mdf-2 complexes onto kinetochores and spindle pole separation. Its function related to the spindle assembly machinery and kinetochore-microtubule attachments likely depends on its association in the mitotic RZZ complex. The RZZ complex recruits the spindly-like protein spdl-1 to kinetochores. To prevent irregular chromosome segregation, the complex also inhibits the attachment of the kinetochore-associated NDC80 complex to microtubules. The recruitment of spdl-1 to kinetochores relieves this inhibition. Required for embryonic development. The sequence is that of Protein zwilch homolog (zwl-1) from Caenorhabditis briggsae.